The following is a 186-amino-acid chain: Ribonuclease M5 (186 aa).

Residues 6–89 form the Toprim domain; that stretch reads SQVIVVEGRD…AFLKRDEAVP (84 aa). Positions 12, 58, and 60 each coordinate Mg(2+).

The protein belongs to the ribonuclease M5 family. Mg(2+) serves as cofactor.

It localises to the cytoplasm. The enzyme catalyses Endonucleolytic cleavage of RNA, removing 21 and 42 nucleotides, respectively, from the 5'- and 3'-termini of a 5S-rRNA precursor.. Required for correct processing of both the 5' and 3' ends of 5S rRNA precursor. Cleaves both sides of a double-stranded region yielding mature 5S rRNA in one step. The protein is Ribonuclease M5 of Streptococcus pneumoniae (strain ATCC BAA-255 / R6).